Reading from the N-terminus, the 185-residue chain is Elongation factor P (185 aa).

This sequence belongs to the elongation factor P family.

The protein resides in the cytoplasm. It participates in protein biosynthesis; polypeptide chain elongation. Functionally, involved in peptide bond synthesis. Stimulates efficient translation and peptide-bond synthesis on native or reconstituted 70S ribosomes in vitro. Probably functions indirectly by altering the affinity of the ribosome for aminoacyl-tRNA, thus increasing their reactivity as acceptors for peptidyl transferase. This is Elongation factor P from Caldanaerobacter subterraneus subsp. tengcongensis (strain DSM 15242 / JCM 11007 / NBRC 100824 / MB4) (Thermoanaerobacter tengcongensis).